Reading from the N-terminus, the 721-residue chain is BBSome complex member BBS2 (721 aa).

Residues 325-369 adopt a coiled-coil conformation; it reads RGNLMDTSAEQDLIRELSQKKQNLLLELRNYEENAKAELASPLNE.

In terms of assembly, part of BBSome complex, that contains BBS1, BBS2, BBS4, BBS5, BBS7, BBS8/TTC8, BBS9 and BBIP10. Interacts (via C-terminus) with BBS7. Interacts (via coiled coil domain) with MKKS. Interacts with CCDC28B and ALDOB. Interacts with DLEC1. Widely expressed.

The protein localises to the cell projection. It localises to the cilium membrane. It is found in the cytoplasm. The protein resides in the cytoskeleton. Its subcellular location is the microtubule organizing center. The protein localises to the centrosome. It localises to the centriolar satellite. The BBSome complex is thought to function as a coat complex required for sorting of specific membrane proteins to the primary cilia. The BBSome complex is required for ciliogenesis but is dispensable for centriolar satellite function. This ciliogenic function is mediated in part by the Rab8 GDP/GTP exchange factor, which localizes to the basal body and contacts the BBSome. Rab8(GTP) enters the primary cilium and promotes extension of the ciliary membrane. Firstly the BBSome associates with the ciliary membrane and binds to RAB3IP/Rabin8, the guanosyl exchange factor (GEF) for Rab8 and then the Rab8-GTP localizes to the cilium and promotes docking and fusion of carrier vesicles to the base of the ciliary membrane. The BBSome complex, together with the LTZL1, controls SMO ciliary trafficking and contributes to the sonic hedgehog (SHH) pathway regulation. Required for proper BBSome complex assembly and its ciliary localization. In Homo sapiens (Human), this protein is BBSome complex member BBS2.